The chain runs to 343 residues: Anthranilate phosphoribosyltransferase (343 aa).

5-phospho-alpha-D-ribose 1-diphosphate contacts are provided by residues glycine 86, 89–90, threonine 94, 96–99, 114–122, and serine 126; these read GD, NIST, and KHGNRSASG. Glycine 86 is an anthranilate binding site. Mg(2+) is bound at residue serine 98. Asparagine 117 contacts anthranilate. Arginine 172 provides a ligand contact to anthranilate. Mg(2+) is bound by residues aspartate 231 and glutamate 232.

The protein belongs to the anthranilate phosphoribosyltransferase family. As to quaternary structure, homodimer. The cofactor is Mg(2+).

The enzyme catalyses N-(5-phospho-beta-D-ribosyl)anthranilate + diphosphate = 5-phospho-alpha-D-ribose 1-diphosphate + anthranilate. Its pathway is amino-acid biosynthesis; L-tryptophan biosynthesis; L-tryptophan from chorismate: step 2/5. In terms of biological role, catalyzes the transfer of the phosphoribosyl group of 5-phosphorylribose-1-pyrophosphate (PRPP) to anthranilate to yield N-(5'-phosphoribosyl)-anthranilate (PRA). The chain is Anthranilate phosphoribosyltransferase from Synechococcus sp. (strain JA-2-3B'a(2-13)) (Cyanobacteria bacterium Yellowstone B-Prime).